The following is a 77-amino-acid chain: Defensin-like protein (77 aa).

Positions 1–30 are cleaved as a signal peptide; it reads MERGMRLFSSLVLVLLLVTATEMGPKVAEA. Intrachain disulfides connect cysteine 33–cysteine 77, cysteine 44–cysteine 64, cysteine 50–cysteine 71, and cysteine 54–cysteine 73.

This sequence belongs to the DEFL family.

The protein localises to the secreted. This chain is Defensin-like protein, found in Nelumbo nucifera (Sacred lotus).